The sequence spans 148 residues: Ribonuclease H (148 aa).

Positions 2–143 (TADIIYIYSD…ADVLANQGVL (142 aa)) constitute an RNase H type-1 domain. Positions 11, 49, 71, and 135 each coordinate Mg(2+).

It belongs to the RNase H family. In terms of assembly, monomer. Requires Mg(2+) as cofactor.

It localises to the cytoplasm. The enzyme catalyses Endonucleolytic cleavage to 5'-phosphomonoester.. Endonuclease that specifically degrades the RNA of RNA-DNA hybrids. This is Ribonuclease H from Thiobacillus denitrificans (strain ATCC 25259 / T1).